A 664-amino-acid polypeptide reads, in one-letter code: MTPPPPGRAAPSAPRARVLSLPARFGLPLRLRLLLVFWVAAASAQGHSRSGPRISAVWKGQDHVDFSQPEPHTVLFHEPGSFSVWVGGRGKVYHFNFPEGKNASVRTVNIGSTKGSCQDKQDCGNYITLLERRGNGLLVCGTNARKPSCWNLVNDSVVMSLGEMKGYAPFSPDENSLVLFEGDEVYSTIRKQEYNGKIPRFRRIRGESELYTSDTVMQNPQFIKATIVHQDQAYDDKIYYFFREDNPDKNPEAPLNVSRVAQLCRGDQGGESSLSVSKWNTFLKAMLVCSDAATNRNFNRLQDVFLLPDPSGQWRDTRVYGVFSNPWNYSAVCVYSLGDIDRVFRTSSLKGYHMGLPNPRPGMCLPKKQPIPTETFQVADSHPEVAQRVEPMGPLKTPLFHSKYHYQKVVVHRMQASNGETFHVLYLTTDRGTIHKVVESGDQDHSFVFNIMEIQPFHRAAAIQAISLDADRRKLYVTSQWEVSQVPLDMCEVYSGGCHGCLMSRDPYCGWDQDRCVSIYSSQRSVLQSINPAEPHRECPNPKPDEAPLQKVSLARNSRYYLTCPMESRHATYLWRHEENVEQSCEPGHQSPSCILFIENLTARQYGHYRCEAQEGSYLREAQHWELLPEDRALAEQLMGHARALAASFWLGVLPTLILGLLVH.

The first 44 residues, 1–44 (MTPPPPGRAAPSAPRARVLSLPARFGLPLRLRLLLVFWVAAASA), serve as a signal peptide directing secretion. The 436-residue stretch at 53–488 (RISAVWKGQD…SQWEVSQVPL (436 aa)) folds into the Sema domain. The N-linked (GlcNAc...) asparagine glycan is linked to Asn102. An intrachain disulfide couples Cys117 to Cys123. Arg132 is modified (asymmetric dimethylarginine). Cys140 and Cys149 are disulfide-bonded. N-linked (GlcNAc...) asparagine glycosylation is found at Asn154 and Asn256. 7 disulfides stabilise this stretch: Cys264-Cys364, Cys289-Cys333, Cys491-Cys509, Cys498-Cys539, Cys501-Cys516, Cys564-Cys611, and Cys585-Cys594. The segment at 265–267 (RGD) is interaction with integrins. A Cell attachment site motif is present at residues 265 to 267 (RGD). A glycan (N-linked (GlcNAc...) asparagine) is linked at Asn328. The 86-residue stretch at 542-627 (PKPDEAPLQK…YLREAQHWEL (86 aa)) folds into the Ig-like C2-type domain. Asn600 is a glycosylation site (N-linked (GlcNAc...) asparagine). The GPI-anchor amidated alanine moiety is linked to residue Ala646. The propeptide at 647 to 664 (ASFWLGVLPTLILGLLVH) is removed in mature form.

The protein belongs to the semaphorin family. As to quaternary structure, interacts with PLXNC1. Interacts with ITGA1 and ITGB1. As to expression, highly expressed in activated T-cells (at protein level). Highest expression in brain. Lower in heart, thymus, spleen, testis and ovary. The expression increases in late embryonic and postnatal stages. Detected in T-cells.

It is found in the cell membrane. Its function is as follows. Plays an important role in integrin-mediated signaling and functions both in regulating cell migration and immune responses. Promotes formation of focal adhesion complexes, activation of the protein kinase PTK2/FAK1 and subsequent phosphorylation of MAPK1 and MAPK3. Promotes production of pro-inflammatory cytokines by monocytes and macrophages. Plays an important role in modulating inflammation and T-cell-mediated immune responses. Promotes axon growth in the embryonic olfactory bulb. Promotes attachment, spreading and dendrite outgrowth in melanocytes. The chain is Semaphorin-7A (Sema7a) from Mus musculus (Mouse).